We begin with the raw amino-acid sequence, 684 residues long: Methionine--tRNA ligase (684 aa).

Residues 12–22 carry the 'HIGH' region motif; it reads PYANGSIHLGH. Positions 143, 146, 156, and 159 each coordinate Zn(2+). The 'KMSKS' region motif lies at 339-343; that stretch reads KMSKS. Lys342 provides a ligand contact to ATP. One can recognise a tRNA-binding domain in the interval 581-684; it reads DFMKIDMRVA…AGAQPGDKVG (104 aa).

It belongs to the class-I aminoacyl-tRNA synthetase family. MetG type 1 subfamily. Homodimer. Zn(2+) is required as a cofactor.

Its subcellular location is the cytoplasm. The enzyme catalyses tRNA(Met) + L-methionine + ATP = L-methionyl-tRNA(Met) + AMP + diphosphate. Is required not only for elongation of protein synthesis but also for the initiation of all mRNA translation through initiator tRNA(fMet) aminoacylation. This is Methionine--tRNA ligase from Neisseria gonorrhoeae (strain ATCC 700825 / FA 1090).